Here is a 248-residue protein sequence, read N- to C-terminus: Serine/arginine-rich splicing factor 1 (248 aa).

At S2 the chain carries N-acetylserine. S2 carries the phosphoserine modification. An RRM 1 domain is found at 16-91; the sequence is CRIYVGNLPP…YRLRVEFPRS (76 aa). K30 participates in a covalent cross-link: Glycyl lysine isopeptide (Lys-Gly) (interchain with G-Cter in SUMO2). K38 carries the N6-acetyllysine; alternate modification. A Glycyl lysine isopeptide (Lys-Gly) (interchain with G-Cter in SUMO2); alternate cross-link involves residue K38. Residues 88 to 134 are disordered; it reads FPRSGRGTGRGGGGGGGGGAPRGRYGPPSRRSENRVVVSGLPPSGSW. An asymmetric dimethylarginine; alternate mark is found at R93, R97, and R109. 3 positions are modified to omega-N-methylarginine; alternate: R93, R97, and R109. Residues 93–108 are compositionally biased toward gly residues; that stretch reads RGTGRGGGGGGGGGAP. R111 carries the post-translational modification Omega-N-methylarginine. Residues 121-195 enclose the RRM 2 domain; the sequence is NRVVVSGLPP…ETAYIRVKVD (75 aa). A Phosphoserine modification is found at S133. N6-acetyllysine is present on K179. Residues 191 to 248 form a disordered region; it reads RVKVDGPRSPSYGRSRSRSRSRSRSRSRSNSRSRSYSPRRSRGSPRYSPRHSRSRSRT. The interaction with SAFB1 stretch occupies residues 198 to 247; the sequence is RSPSYGRSRSRSRSRSRSRSRSNSRSRSYSPRRSRGSPRYSPRHSRSRSR. Residues S199 and S201 each carry the phosphoserine modification. Y202 is modified (phosphotyrosine). 6 positions are modified to phosphoserine: S205, S207, S209, S231, S234, and S238. Positions 205 to 248 are enriched in basic residues; the sequence is SRSRSRSRSRSRSRSNSRSRSYSPRRSRGSPRYSPRHSRSRSRT.

Belongs to the splicing factor SR family. As to quaternary structure, consists of two polypeptides of p32 and p33. Identified in the spliceosome C complex. Component of a ribonucleoprotein complex containing mRNAs and RNA-binding proteins including DDX5, HNRNPH2 and SRSF1 as well as splicing regulator ARVCF. In vitro, self-associates and binds SRSF2, SNRNP70 and U2AF1 but not U2AF2. Binds SREK1/SFRS12. Interacts with SAFB/SAFB1. Interacts with PSIP1/LEDGF. Interacts with RSRC1 (via Arg/Ser-rich domain). Interacts with ZRSR2/U2AF1-RS2. Interacts with CCDC55 (via C-terminus). Interacts with SRPK1 and a sliding docking interaction is essential for its sequential and processive phosphorylation by SRPK1. Interacts with NXF1. Interacts with CCNL1, CCNL2 and CDK11B. Interacts with RRP1B. Interacts (when phosphorylated in its RS domain) with TNPO3; promoting nuclear import. Interacts with ILDR1 (via C-terminus) and ILDR2. Post-translationally, phosphorylated by CLK1, CLK2, CLK3 and CLK4. Phosphorylated by SRPK1 at multiple serines in its RS domain via a directional (C-terminal to N-terminal) and a dual-track mechanism incorporating both processive phosphorylation (in which the kinase stays attached to the substrate after each round of phosphorylation) and distributive phosphorylation steps (in which the kinase and substrate dissociate after each phosphorylation event). The RS domain of SRSF1 binds to a docking groove in the large lobe of the kinase domain of SRPK1 and this induces certain structural changes in SRPK1 and/or RRM 2 domain of SRSF1, allowing RRM 2 to bind the kinase and initiate phosphorylation. The cycles continue for several phosphorylation steps in a processive manner (steps 1-8) until the last few phosphorylation steps (approximately steps 9-12). During that time, a mechanical stress induces the unfolding of the beta-4 motif in RRM 2, which then docks at the docking groove of SRPK1. This also signals RRM 2 to begin to dissociate, which facilitates SRSF1 dissociation after phosphorylation is completed. In terms of processing, asymmetrically dimethylated at arginines, probably by PRMT1, methylation promotes localization to nuclear speckles.

The protein localises to the cytoplasm. It is found in the nucleus speckle. Its function is as follows. Plays a role in preventing exon skipping, ensuring the accuracy of splicing and regulating alternative splicing. Interacts with other spliceosomal components, via the RS domains, to form a bridge between the 5'- and 3'-splice site binding components, U1 snRNP and U2AF. Can stimulate binding of U1 snRNP to a 5'-splice site-containing pre-mRNA. Binds to purine-rich RNA sequences, either the octamer, 5'-RGAAGAAC-3' (r=A or G) or the decamers, AGGACAGAGC/AGGACGAAGC. Binds preferentially to the 5'-CGAGGCG-3' motif in vitro. Three copies of the octamer constitute a powerful splicing enhancer in vitro, the ASF/SF2 splicing enhancer (ASE) which can specifically activate ASE-dependent splicing. May function as export adapter involved in mRNA nuclear export through the TAP/NXF1 pathway. The sequence is that of Serine/arginine-rich splicing factor 1 (SRSF1) from Bos taurus (Bovine).